We begin with the raw amino-acid sequence, 348 residues long: 4-hydroxyphenylpyruvate dioxygenase (348 aa).

VOC domains follow at residues 11–141 (GFAF…ITSP) and 151–303 (AIDH…IFTE). Residues histidine 154, histidine 232, and glutamate 312 each contribute to the Fe cation site.

It belongs to the 4HPPD family. The cofactor is Fe cation.

The catalysed reaction is 3-(4-hydroxyphenyl)pyruvate + O2 = homogentisate + CO2. Its function is as follows. Catalyzes the transformation of p-hydroxyphenylpyruvate into HGA. Has hemolytic and brown pigment production activity. This chain is 4-hydroxyphenylpyruvate dioxygenase (lly), found in Legionella pneumophila subsp. pneumophila (strain Philadelphia 1 / ATCC 33152 / DSM 7513).